We begin with the raw amino-acid sequence, 1257 residues long: Liprin-alpha-2 (1257 aa).

The tract at residues 1–29 (MMCEVMPTINEDTPMSQRGSQSSGSDSDS) is disordered. The span at 16–26 (SQRGSQSSGSD) shows a compositional bias: low complexity. 2 coiled-coil regions span residues 29 to 154 (SHFE…SLRM) and 185 to 235 (KALD…SSEG). A Phosphoserine modification is found at Ser236. Thr237 carries the phosphothreonine modification. Ser239 is subject to Phosphoserine. Coiled coils occupy residues 264-541 (TDDT…SLIE) and 643-695 (HSDA…GLNL). The interval 439-463 (GQLEEKNQELQRARQREKMNEEHNK) is disordered. Ser687 and Ser689 each carry phosphoserine. Residues 709–725 (TASSLASSSPPSGHSTP) show a composition bias toward low complexity. 2 disordered regions span residues 709–738 (TASS…EMDR) and 759–834 (EEDG…KSSI). Positions 787–802 (TLPSSYHNDARSSLSA) are enriched in polar residues. Residues Ser817 and Ser820 each carry the phosphoserine modification. 3 SAM domains span residues 898-964 (WDGP…MVSL), 1020-1084 (NHEW…LKRL), and 1108-1177 (WSND…LLAL). Residues 1081 to 1107 (LKRLNYDRKELERRREASQHEIKDVLV) adopt a coiled-coil conformation.

This sequence belongs to the liprin family. Liprin-alpha subfamily. Forms homodimers and heterodimers with liprins-alpha and liprins-beta. Interacts with the second PTPase domain of PTPRD, PTPRF and PTPRS. Interacts with KIF1A; the interaction decreases in presence of calcium.

The protein resides in the cytoplasm. It is found in the cell surface. It localises to the cell projection. Its subcellular location is the dendritic spine. Alters PTPRF cellular localization and induces PTPRF clustering. May regulate the disassembly of focal adhesions. May localize receptor-like tyrosine phosphatases type 2A at specific sites on the plasma membrane, possibly regulating their interaction with the extracellular environment and their association with substrates. In neuronal cells, is a scaffolding protein in the dendritic spines which acts as immobile postsynaptic post able to recruit KIF1A-driven dense core vesicles to dendritic spines. The sequence is that of Liprin-alpha-2 (Ppfia2) from Mus musculus (Mouse).